Reading from the N-terminus, the 115-residue chain is Large ribosomal subunit protein P2 (115 aa).

Met-1 is modified (N-acetylmethionine). A phosphoserine mark is found at Ser-17 and Ser-19. Lys-21 is subject to N6-acetyllysine; alternate. An N6-succinyllysine; alternate modification is found at Lys-21. The segment covering 76-90 has biased composition (low complexity); the sequence is APGSAAPAAGSAPAA. Positions 76 to 115 are disordered; that stretch reads APGSAAPAAGSAPAAAEEKKEEKKEESEESDDDMGFGLFD. Ser-79 and Ser-86 each carry phosphoserine. Positions 91–101 are enriched in basic and acidic residues; sequence AEEKKEEKKEE. 2 positions are modified to phosphoserine: Ser-102 and Ser-105.

Belongs to the eukaryotic ribosomal protein P1/P2 family. In terms of assembly, heterodimer with RPLP1 at the lateral ribosomal stalk of the large ribosomal subunit.

In terms of biological role, plays an important role in the elongation step of protein synthesis. This chain is Large ribosomal subunit protein P2 (RPLP2), found in Bos taurus (Bovine).